We begin with the raw amino-acid sequence, 165 residues long: MATLLFDDGREATAAEIEAIARAHRIVVEHRPVPAALAETLARPLLDDTAAATVLDALPPRPEFPSRDLIVLHPERPDNEQLATKFENWHRHAGDEIRHILDGAGIFGVIVDGQRADLHVGPGDFIVVPAGLEHNFRLTAARRIKAVRYLSDAEGWSAEFTGRAA.

Fe(2+) is bound by residues His-90, His-92, Glu-96, and His-134. Residues His-90, His-92, Glu-96, and His-134 each contribute to the Ni(2+) site.

It belongs to the acireductone dioxygenase (ARD) family. As to quaternary structure, monomer. The cofactor is Fe(2+). It depends on Ni(2+) as a cofactor.

The enzyme catalyses 1,2-dihydroxy-5-(methylsulfanyl)pent-1-en-3-one + O2 = 3-(methylsulfanyl)propanoate + CO + formate + 2 H(+). The catalysed reaction is 1,2-dihydroxy-5-(methylsulfanyl)pent-1-en-3-one + O2 = 4-methylsulfanyl-2-oxobutanoate + formate + 2 H(+). The protein operates within amino-acid biosynthesis; L-methionine biosynthesis via salvage pathway; L-methionine from S-methyl-5-thio-alpha-D-ribose 1-phosphate: step 5/6. Catalyzes 2 different reactions between oxygen and the acireductone 1,2-dihydroxy-3-keto-5-methylthiopentene (DHK-MTPene) depending upon the metal bound in the active site. Fe-containing acireductone dioxygenase (Fe-ARD) produces formate and 2-keto-4-methylthiobutyrate (KMTB), the alpha-ketoacid precursor of methionine in the methionine recycle pathway. Ni-containing acireductone dioxygenase (Ni-ARD) produces methylthiopropionate, carbon monoxide and formate, and does not lie on the methionine recycle pathway. This chain is Acireductone dioxygenase, found in Rhodopseudomonas palustris (strain TIE-1).